Here is a 308-residue protein sequence, read N- to C-terminus: D-alanine--D-alanine ligase (308 aa).

Residues 106–305 form the ATP-grasp domain; the sequence is KMLWKAFGLP…FEQLVVKILE (200 aa). An ATP-binding site is contributed by 136-191; it reads VEKLGLPLMVKPSLEGSSVGLTKVNAIDDLKSAVEFALQYDETVLIEEWLSGDELT. The Mg(2+) site is built by aspartate 259, glutamate 272, and asparagine 274.

This sequence belongs to the D-alanine--D-alanine ligase family. The cofactor is Mg(2+). It depends on Mn(2+) as a cofactor.

It is found in the cytoplasm. It catalyses the reaction 2 D-alanine + ATP = D-alanyl-D-alanine + ADP + phosphate + H(+). It participates in cell wall biogenesis; peptidoglycan biosynthesis. Functionally, cell wall formation. The protein is D-alanine--D-alanine ligase of Histophilus somni (strain 2336) (Haemophilus somnus).